Here is a 297-residue protein sequence, read N- to C-terminus: Large ribosomal subunit protein uL18 (297 aa).

G2 is modified (N-acetylglycine). An N6-acetyllysine mark is found at K5 and K48. S185 is modified (phosphoserine). K220 carries the post-translational modification N6-acetyllysine; alternate. K220 participates in a covalent cross-link: Glycyl lysine isopeptide (Lys-Gly) (interchain with G-Cter in SUMO1); alternate. A Glycyl lysine isopeptide (Lys-Gly) (interchain with G-Cter in SUMO2); alternate cross-link involves residue K220. T232 is subject to Phosphothreonine. The segment at 253-297 (YEKKPKREVKKKRWNRPKMSLAQKKDRVAQKKASFLRAQERAAES) is disordered. A compositionally biased stretch (basic residues) spans 258–268 (KREVKKKRWNR). S272 bears the Phosphoserine mark.

It belongs to the universal ribosomal protein uL18 family. As to quaternary structure, component of the large ribosomal subunit (LSU). Part of the 5S RNP complex, which is a LSU subcomplex composed of the 5S RNA, RPL5 and RPL11. Component of a hexameric 5S RNP precursor complex, composed of 5S RNA, RRS1, RPF2/BXDC1, RPL5, RPL11 and HEATR3; this complex acts as a precursor for ribosome assembly. Interacts with NVL in an ATP-dependent manner. Interacts with RRP1B. Interacts with IPO5, IPO7 and KPNB1; these interactions may be involved in RPL5 nuclear import for the assembly of ribosomal subunits.

Its subcellular location is the cytoplasm. The protein localises to the nucleus. It is found in the nucleolus. Functionally, component of the ribosome, a large ribonucleoprotein complex responsible for the synthesis of proteins in the cell. The small ribosomal subunit (SSU) binds messenger RNAs (mRNAs) and translates the encoded message by selecting cognate aminoacyl-transfer RNA (tRNA) molecules. The large subunit (LSU) contains the ribosomal catalytic site termed the peptidyl transferase center (PTC), which catalyzes the formation of peptide bonds, thereby polymerizing the amino acids delivered by tRNAs into a polypeptide chain. The nascent polypeptides leave the ribosome through a tunnel in the LSU and interact with protein factors that function in enzymatic processing, targeting, and the membrane insertion of nascent chains at the exit of the ribosomal tunnel. As part of the 5S RNP/5S ribonucleoprotein particle it is an essential component of the LSU, required for its formation and the maturation of rRNAs. It also couples ribosome biogenesis to p53/TP53 activation. As part of the 5S RNP it accumulates in the nucleoplasm and inhibits MDM2, when ribosome biogenesis is perturbed, mediating the stabilization and the activation of TP53. The polypeptide is Large ribosomal subunit protein uL18 (Rpl5) (Mus musculus (Mouse)).